The primary structure comprises 48 residues: Cytochrome b559 subunit beta (48 aa).

Residues 23-39 (WLAVHALAIPSVFFLGS) traverse the membrane as a helical segment. H27 is a heme binding site.

It belongs to the PsbE/PsbF family. As to quaternary structure, heterodimer of an alpha subunit and a beta subunit. PSII is composed of 1 copy each of membrane proteins PsbA, PsbB, PsbC, PsbD, PsbE, PsbF, PsbH, PsbI, PsbJ, PsbK, PsbL, PsbM, PsbT, PsbX, PsbY, Psb30/Ycf12, peripheral proteins PsbO, CyanoQ (PsbQ), PsbU, PsbV and a large number of cofactors. It forms dimeric complexes. Heme b is required as a cofactor.

Its subcellular location is the cellular thylakoid membrane. Its function is as follows. This b-type cytochrome is tightly associated with the reaction center of photosystem II (PSII). PSII is a light-driven water:plastoquinone oxidoreductase that uses light energy to abstract electrons from H(2)O, generating O(2) and a proton gradient subsequently used for ATP formation. It consists of a core antenna complex that captures photons, and an electron transfer chain that converts photonic excitation into a charge separation. The polypeptide is Cytochrome b559 subunit beta (Prochlorococcus marinus (strain MIT 9301)).